A 972-amino-acid polypeptide reads, in one-letter code: Leucine--tRNA ligase (972 aa).

The 'HIGH' region signature appears at 78-89; the sequence is PYPSGDGLHVGH. The short motif at 741–745 is the 'KMSKS' region element; sequence KIGKS. Position 744 (lysine 744) interacts with ATP.

Belongs to the class-I aminoacyl-tRNA synthetase family.

The protein localises to the cytoplasm. It carries out the reaction tRNA(Leu) + L-leucine + ATP = L-leucyl-tRNA(Leu) + AMP + diphosphate. This chain is Leucine--tRNA ligase, found in Mycobacterium leprae (strain Br4923).